The chain runs to 189 residues: 5-hmdU DNA kinase (189 aa).

Belongs to the thymidylate kinase family. 5-hmdU DNA kinase subfamily.

The enzyme catalyses 5-hydroxymethyl-dUMP in DNA + ATP = 5-phosphomethyl-dUMP in DNA + ADP + H(+). Phosphorylates 5-hydroxymethyluracil (5hmdU) into 5-phosphomethyl-2'-deoxyuridine (5- PmdU) on DNA as a step in the pathway leading to thymidine hypermodifications in the viral genome. The phosphate is added internally to the DNA polymer. As a final result of the pathway of hypermodification, 5-AcNmdU substitutes for a subset of thymidines in the viral DNA. These modifications probably prevent degradation of viral genome by the host restriction-modification antiviral defense system. This is 5-hmdU DNA kinase from Pseudomonas phage PaMx11.